Here is a 117-residue protein sequence, read N- to C-terminus: Synaptobrevin homolog 1 (117 aa).

A disordered region spans residues M1–A30. Residues M1–M94 lie on the Cytoplasmic side of the membrane. One can recognise a v-SNARE coiled-coil homology domain in the interval R28 to K88. Residue K63 forms a Glycyl lysine isopeptide (Lys-Gly) (interchain with G-Cter in ubiquitin) linkage. C95 carries the S-palmitoyl cysteine lipid modification. A helical; Anchor for type IV membrane protein membrane pass occupies residues C95–I111. Topologically, residues A112–R117 are vesicular.

This sequence belongs to the synaptobrevin family. Palmitoylated by SWF1.

Its subcellular location is the endomembrane system. In terms of biological role, SNC1 and SNC2 are vesicle-targeting proteins essential for normal secretory traffic between the Golgi and the plasma membrane. They may also be involved in vesicle fusion. In Saccharomyces cerevisiae (strain ATCC 204508 / S288c) (Baker's yeast), this protein is Synaptobrevin homolog 1 (SNC1).